A 103-amino-acid chain; its full sequence is Small ribosomal subunit protein uS10 (103 aa).

The protein belongs to the universal ribosomal protein uS10 family. As to quaternary structure, part of the 30S ribosomal subunit.

Functionally, involved in the binding of tRNA to the ribosomes. In Verminephrobacter eiseniae (strain EF01-2), this protein is Small ribosomal subunit protein uS10.